The sequence spans 625 residues: Probable potassium transport system protein Kup (625 aa).

The next 12 helical transmembrane spans lie at 10-30, 50-70, 102-122, 135-155, 172-192, 214-234, 251-271, 284-304, 340-360, 369-389, 397-417, and 422-442; these read LAALTLAAVGIVYGDIGTSPL, LLGVVSLIVWGLIIIVSLKYV, YFPLMVMGLFGATLFYGDSVI, LGVATSAFDPYVVPVTVAILV, FGPVMLIWFITLAVMGVVNII, GFLAFIALGAVVLAFTGAEAL, FLIAFPALSLNYLGQGALLLL, LGAWSIYPLVALSTMAAIIAS, IYIPAVNWLQMIVVVLAVIGF, AYGIAVTATMMVTTVLTFFVI, LILCVAATGFFLVIDLSLFSA, and LFHGGWFPLLLGVVLFTLMLT.

This sequence belongs to the HAK/KUP transporter (TC 2.A.72) family.

Its subcellular location is the cell inner membrane. It carries out the reaction K(+)(in) + H(+)(in) = K(+)(out) + H(+)(out). Its function is as follows. Transport of potassium into the cell. Likely operates as a K(+):H(+) symporter. The sequence is that of Probable potassium transport system protein Kup from Herminiimonas arsenicoxydans.